The following is a 178-amino-acid chain: Cytochrome b6-f complex iron-sulfur subunit (178 aa).

Residues 20–42 form a helical membrane-spanning segment; sequence LLTFGTATGVALGALYPVANYFM. The 97-residue stretch at 65-161 folds into the Rieske domain; sequence KTGWLANHQA…VDVDDDAVLV (97 aa). Positions 107, 109, 125, and 128 each coordinate [2Fe-2S] cluster. A disulfide bridge links Cys-112 with Cys-127.

Belongs to the Rieske iron-sulfur protein family. As to quaternary structure, the 4 large subunits of the cytochrome b6-f complex are cytochrome b6, subunit IV (17 kDa polypeptide, PetD), cytochrome f and the Rieske protein, while the 4 small subunits are PetG, PetL, PetM and PetN. The complex functions as a dimer. [2Fe-2S] cluster serves as cofactor.

The protein resides in the cellular thylakoid membrane. The catalysed reaction is 2 oxidized [plastocyanin] + a plastoquinol + 2 H(+)(in) = 2 reduced [plastocyanin] + a plastoquinone + 4 H(+)(out). Functionally, component of the cytochrome b6-f complex, which mediates electron transfer between photosystem II (PSII) and photosystem I (PSI), cyclic electron flow around PSI, and state transitions. This is Cytochrome b6-f complex iron-sulfur subunit from Prochlorococcus marinus (strain MIT 9515).